Here is a 428-residue protein sequence, read N- to C-terminus: Tyrosine--tRNA ligase (428 aa).

Position 41 (Tyr-41) interacts with L-tyrosine. The 'HIGH' region motif lies at 46 to 55 (PTADSLHLGH). 2 residues coordinate L-tyrosine: Tyr-179 and Gln-183. Residues 239-243 (KFGKT) carry the 'KMSKS' region motif. Lys-242 contacts ATP. One can recognise an S4 RNA-binding domain in the interval 361-418 (ADLMQALVDAELQPSRGQARKTIASNAVTINGEKQSDPEYIFNDEDRLFGRYTLLRRG).

Belongs to the class-I aminoacyl-tRNA synthetase family. TyrS type 1 subfamily. In terms of assembly, homodimer.

Its subcellular location is the cytoplasm. It catalyses the reaction tRNA(Tyr) + L-tyrosine + ATP = L-tyrosyl-tRNA(Tyr) + AMP + diphosphate + H(+). In terms of biological role, catalyzes the attachment of tyrosine to tRNA(Tyr) in a two-step reaction: tyrosine is first activated by ATP to form Tyr-AMP and then transferred to the acceptor end of tRNA(Tyr). This chain is Tyrosine--tRNA ligase, found in Salmonella paratyphi C (strain RKS4594).